A 116-amino-acid polypeptide reads, in one-letter code: MAAIPSSGSLVATHDYYRRRLGSTSSNSSCGSAEYPGEAIPHHPGLPKADPGHWWASFFFGKSTLPFMATVLESPEHSESAQASTSTITCDLAQKAVGKQQPSGQPGKTTAGPRPE.

A Phosphoserine modification is found at Ser9. Disordered regions lie at residues 22-47 and 92-116; these read GSTS…PGLP and LAQK…PRPE. The segment covering 23 to 32 has biased composition (low complexity); the sequence is STSSNSSCGS.

Belongs to the PPDPF family.

Functionally, probable regulator of exocrine pancreas development. The sequence is that of Pancreatic progenitor cell differentiation and proliferation factor (PPDPF) from Bos taurus (Bovine).